A 724-amino-acid polypeptide reads, in one-letter code: Hyperosmolality-gated Ca2+ permeable channel 3.1 (724 aa).

The Extracellular segment spans residues 1–4; it reads MEFG. The chain crosses the membrane as a helical span at residues 5–25; that stretch reads SFLVSLGTSFVIFVILMLLFT. At 26–85 the chain is on the cytoplasmic side; it reads WLSRKSGNAPIYYPNRILKGLEPWEGTSLTRNPFAWMREALTSSEQDVVNLSGVDTAVHF. The chain crosses the membrane as a helical span at residues 86–108; sequence VFLSTVLGIFACSSLLLLPTLLP. Residues 109–147 are Extracellular-facing; sequence LAATDNNIKNTKNATDTTSKGTFSQLDNLSMANITKKSS. The chain crosses the membrane as a helical span at residues 148–170; sequence RLWAFLGAVYWISLVTYFFLWKA. Topologically, residues 171-358 are cytoplasmic; sequence YKHVSSLRAQ…WQNLNIKLFS (188 aa). Residues 241-309 adopt a coiled-coil conformation; sequence EKLEGYKKKL…KAVLAEKQQT (69 aa). The chain crosses the membrane as a helical span at residues 359–385; that stretch reads RIIRQYFIYFFVAVTILFYMIPIAFVS. Residues 386–411 are Extracellular-facing; it reads AITTLKNLQRIIPFIKPVVEITAIRT. The helical transmembrane segment at 412 to 439 threads the bilayer; sequence VLESFLPQIALIVFLAMLPKLLLFLSKA. The Cytoplasmic segment spans residues 440–448; sequence EGIPSQSHA. Residues 449-472 form a helical membrane-spanning segment; it reads IRAASGKYFYFSVFNVFIGVTLAG. At 473-497 the chain is on the extracellular side; it reads TLFNTVKDIAKNPKLDMIINLLATS. Residues 498 to 529 form a helical membrane-spanning segment; that stretch reads LPKSATFFLTYVALKFFIGYGLELSRIIPLII. Topologically, residues 530–554 are cytoplasmic; sequence FHLKKKYLCKTEAEVKEAWYPGDLS. The helical transmembrane segment at 555 to 574 threads the bilayer; that stretch reads YATRVPGDMLILTITFCYSV. A topological domain (extracellular) is located at residue Ile575. Residues 576 to 594 traverse the membrane as a helical segment; the sequence is APLILIFGITYFGLGWLVL. At 595 to 612 the chain is on the cytoplasmic side; sequence RNQALKVYVPSYESYGRM. The helical transmembrane segment at 613–636 threads the bilayer; sequence WPHIHQRILAALFLFQVVMFGYLG. Topologically, residues 637–641 are extracellular; sequence AKTFF. The helical transmembrane segment at 642 to 662 threads the bilayer; it reads YTALVIPLIITSLIFGYVCRQ. At 663–724 the chain is on the cytoplasmic side; it reads KFYGGFEHTA…YQDFNAIAGV (62 aa).

The protein belongs to the CSC1 (TC 1.A.17) family. Homodimer.

It is found in the membrane. Acts as a hyperosmolarity-gated non-selective cation channel that permeates Ca(2+) ions. Mechanosensitive ion channel that converts mechanical stimuli into a flow of ions: activated in response to membrane stretch. Not activated in response to membrane poke. The protein is Hyperosmolality-gated Ca2+ permeable channel 3.1 of Arabidopsis thaliana (Mouse-ear cress).